An 854-amino-acid chain; its full sequence is MKTEFGFSNLVGTIFSKGNLVFTPDGFSILSPVGNRVSVYNLKDNTSYTFPFENHKNISHIALSPTSTLLLSVDEEGRCILCNFLRRSVLHYFNFKSPVGAIEFSPNGKFFAVSLGKLIQVWRTPNSLEEREFAPFVLHREYTGHFDDIVSISWSADSRFFISTSKDLTARLHSVDPIEGFHPCALTGHKNTVVSGFFSKDQQTIYTVSKDGALFVWKYSPLFQAGEVIDEEAEENKTRTHIWLIKERHYFNQNSKLRCAAFHPTSNLLVVGFSSGLFGIYELPSFTMLYQLSITQSNIDTLTVNSTGDWIAIGSSKLGQLLVWEWQSESYVLKQQSHYDALSTLQYSSDGQRIITGADDGKIKVWDMNSGFCIVTFTQHTSAVSGLCFSKRGNVLFSSSLDGSVRAWDLIRYRNFRTFTAPSRVQFSCIAVDPSGEIVCAGSQDSFEIFMWSVQTGQLLETLAGHEGPVSSLSFNSSGSLLASGSWDKTVRIWDIFSRSGIVEPLPIPSDVLSLAFHPDGKEVCVASLDGQLTFWNVQEGKQTSLIDGRKDLSGGRRFDDARTAENSSLNKTFTSICYSADGSCVLSAGTSKYVCLYDIITGVLIKKFQLSKNESLQGVQEMLNSRKMTEAGSIELIDTQGEESDLEDRIDRTLPGARRGDLSARKTRPEIICHGVQFSPSGGAFAAATTEGLMIYSLYNDFLFDPINLDMDITPSTTLTMCAEGEFLISLVMALRLNEYKVVQKVYESIPITDVEHVVQELPVSYLANFMGYLSSFAAETPHIEFHLRWMKSVLTYHGEYLRRKNFEFASQLTSLQKSIVVLSKRLSQLSSNNEFQLSFLLDKMHLRLENTA.

WD repeat units lie at residues 9–52 (NLVG…TFPF), 53–93 (ENHK…LHYF), 94–132 (NFKS…EERE), 144–183 (GHFD…GFHP), 188–227 (GHKN…QAGE), 252–291 (NQNS…MLYQ), 294–334 (ITQS…YVLK), 337–376 (SHYD…CIVT), 379–418 (QHTS…NFRT), 422–464 (PSRV…ETLA), 465–504 (GHEG…GIVE), 507–546 (PIPS…QTSL), and 569–608 (SLNK…LIKK). Thr640 is modified (phosphothreonine). A Phosphoserine modification is found at Ser645. The stretch at 668 to 709 (TRPEIICHGVQFSPSGGAFAAATTEGLMIYSLYNDFLFDPIN) is one WD 14 repeat.

The protein belongs to the WD repeat PWP2 family.

This Schizosaccharomyces pombe (strain 972 / ATCC 24843) (Fission yeast) protein is Periodic tryptophan protein 2 homolog.